We begin with the raw amino-acid sequence, 889 residues long: Phosphofurin acidic cluster sorting protein 2 (889 aa).

3 disordered regions span residues 180-246 (DHED…TSMT), 293-463 (LDME…PDAR), and 687-740 (SSAT…SQGV). A compositionally biased stretch (basic and acidic residues) spans 343-358 (SHKEPPSPADVPEKTR). Phosphoserine is present on residues serine 390, serine 416, serine 453, serine 691, and serine 694. 2 stretches are compositionally biased toward low complexity: residues 687 to 720 (SSAT…KEAS) and 727 to 737 (PSVSGGLSSPS).

This sequence belongs to the PACS family. In terms of assembly, interacts with BID and PKD2. Interacts with SIRT1. Interacts with HDAC1. Interacts with TRPV1. Interacts with WDR37. As to quaternary structure, (Microbial infection) Interacts with HIV-1 Nef. Broadly expressed, with greatest levels in skeletal muscle followed by heart, brain, pancreas and testis.

The protein localises to the endoplasmic reticulum. The protein resides in the mitochondrion. Multifunctional sorting protein that controls the endoplasmic reticulum (ER)-mitochondria communication, including the apposition of mitochondria with the ER and ER homeostasis. In addition, in response to apoptotic inducer, translocates BIB to mitochondria, which initiates a sequence of events including the formation of mitochondrial truncated BID, the release of cytochrome c, the activation of caspase-3 thereby causing cell death. May also be involved in ion channel trafficking, directing acidic cluster-containing ion channels to distinct subcellular compartments. The sequence is that of Phosphofurin acidic cluster sorting protein 2 from Homo sapiens (Human).